Consider the following 610-residue polypeptide: Serine/threonine-protein kinase RCK2 (610 aa).

Disordered regions lie at residues 1–55 (MLKI…QDKN) and 99–127 (TSVPAIDVHESSEGQLSSDPLISDESLSE). Positions 11–24 (KKPDQADLSQESKK) are enriched in basic and acidic residues. Residues 31–55 (RSSGTNNKDVSQITSSPKKSFQDKN) show a composition bias toward polar residues. Residues Ser46 and Ser50 each carry the phosphoserine modification. One can recognise a Protein kinase domain in the interval 163–478 (YKLINKIGEG…IDQFLDDPWL (316 aa)). 169–177 (IGEGAFSKV) lines the ATP pocket. Ser187 carries the post-translational modification Phosphoserine. Lys201 serves as a coordination point for ATP. Asp313 serves as the catalytic Proton acceptor. Position 350 is a phosphothreonine (Thr350). Residues 493-506 (KKAGTSERRHPHKK) are calmodulin-binding. Position 520 is a phosphoserine (Ser520). Residues 541–564 (EDRMGTRGGLGSLAEDEELEDSYS) form a disordered region.

This sequence belongs to the protein kinase superfamily. CAMK Ser/Thr protein kinase family. CaMK subfamily. In terms of processing, autophosphorylated. Phosphorylated by HOG1 at Ser-520 after osmotic stress.

Its subcellular location is the cytoplasm. It carries out the reaction L-seryl-[protein] + ATP = O-phospho-L-seryl-[protein] + ADP + H(+). The enzyme catalyses L-threonyl-[protein] + ATP = O-phospho-L-threonyl-[protein] + ADP + H(+). Its activity is regulated as follows. Activated by Ser-520 phosphorylation by HOG1. Serine/threonine-protein kinase involved in a signal transduction pathway that is activated by changes in the osmolarity of the extracellular environment. The polypeptide is Serine/threonine-protein kinase RCK2 (RCK2) (Saccharomyces cerevisiae (strain ATCC 204508 / S288c) (Baker's yeast)).